Reading from the N-terminus, the 1372-residue chain is DNA-directed RNA polymerase subunit beta' (1372 aa).

Zn(2+) contacts are provided by Cys-69, Cys-71, Cys-84, and Cys-87. Positions 460, 462, and 464 each coordinate Mg(2+). Cys-808, Cys-882, Cys-889, and Cys-892 together coordinate Zn(2+).

This sequence belongs to the RNA polymerase beta' chain family. In terms of assembly, the RNAP catalytic core consists of 2 alpha, 1 beta, 1 beta' and 1 omega subunit. When a sigma factor is associated with the core the holoenzyme is formed, which can initiate transcription. Mg(2+) is required as a cofactor. The cofactor is Zn(2+).

The catalysed reaction is RNA(n) + a ribonucleoside 5'-triphosphate = RNA(n+1) + diphosphate. Functionally, DNA-dependent RNA polymerase catalyzes the transcription of DNA into RNA using the four ribonucleoside triphosphates as substrates. The protein is DNA-directed RNA polymerase subunit beta' of Rickettsia felis (strain ATCC VR-1525 / URRWXCal2) (Rickettsia azadi).